Reading from the N-terminus, the 79-residue chain is Moronecidin (79 aa).

A signal peptide spans 1–22; the sequence is MKCATLSLVLSMVVLMAEPGDA. Gly-44 bears the Glycine amide mark. Residues 45–68 form a disordered region; it reads GKAEQDQQDQQYQQDQQDQQAQQY. The propeptide occupies 47-79; the sequence is AEQDQQDQQYQQDQQDQQAQQYQRFNRERAAFD. A compositionally biased stretch (low complexity) spans 52-68; it reads QDQQYQQDQQDQQAQQY.

Expressed in gill, skin, intestine, spleen, anterior kidney, and blood cells.

Its subcellular location is the secreted. Its function is as follows. Antimicrobial peptide with broad-spectrum activity against Gram-positive and Gram-negative bacteria as well as against a variety of fungi. Rapidly inactivates both channel catfish herpesvirus (ED(50)=4 uM) and frog virus 3 (ED(50)=13 uM) over a wide temperature range. Seems to disrupt the membranes by adopting an alpha helical conformation. This chain is Moronecidin, found in Morone chrysops (White bass).